The sequence spans 333 residues: Homoserine O-succinyltransferase (333 aa).

The active-site Acyl-thioester intermediate is the C147. K168 and S196 together coordinate substrate. H239 functions as the Proton acceptor in the catalytic mechanism. E241 is a catalytic residue. R253 contributes to the substrate binding site.

The protein belongs to the MetA family.

It is found in the cytoplasm. It carries out the reaction L-homoserine + succinyl-CoA = O-succinyl-L-homoserine + CoA. Its pathway is amino-acid biosynthesis; L-methionine biosynthesis via de novo pathway; O-succinyl-L-homoserine from L-homoserine: step 1/1. Transfers a succinyl group from succinyl-CoA to L-homoserine, forming succinyl-L-homoserine. In Rhodopseudomonas palustris, this protein is Homoserine O-succinyltransferase.